We begin with the raw amino-acid sequence, 561 residues long: Liver carboxylesterase 1F (561 aa).

Positions 1–18 (MCLSFLFLVSLATCVVYG) are cleaved as a signal peptide. The N-linked (GlcNAc...) asparagine glycan is linked to Asn79. A disulfide bridge links Cys87 with Cys116. The active-site Acyl-ester intermediate is Ser221. Cys273 and Cys284 are oxidised to a cystine. Active-site charge relay system residues include Glu353 and His466. Residues 558 to 561 (HNEL) carry the Prevents secretion from ER motif.

It belongs to the type-B carboxylesterase/lipase family. In terms of tissue distribution, expressed in liver and kidney.

Its subcellular location is the lipid droplet. The protein localises to the cytoplasm. It localises to the cytosol. The protein resides in the endoplasmic reticulum. It is found in the microsome. It catalyses the reaction a carboxylic ester + H2O = an alcohol + a carboxylate + H(+). The catalysed reaction is all-trans-retinyl hexadecanoate + H2O = all-trans-retinol + hexadecanoate + H(+). Involved in the detoxification of xenobiotics and in the activation of ester and amide prodrugs. Hydrolyzes retinyl esters. Hydrolyzes p-nitrophenyl butyrate (PNPB), triacylglycerol and monoacylglycerol. Shows higher activity against PNPB, a short-chain fatty acid ester, than against triolein, a long-chain fatty acid ester. Shows no detectable activity against diacylglycerol, cholesterol ester or phospholipids. May play a role in adipocyte lipolysis. This is Liver carboxylesterase 1F from Rattus norvegicus (Rat).